The chain runs to 137 residues: Large ribosomal subunit protein uL16c (137 aa).

Belongs to the universal ribosomal protein uL16 family. In terms of assembly, part of the 50S ribosomal subunit.

It is found in the plastid. This is Large ribosomal subunit protein uL16c from Cuscuta reflexa (Southern Asian dodder).